Here is a 557-residue protein sequence, read N- to C-terminus: NAC domain-containing protein 17 (557 aa).

The NAC domain occupies 16–166 (SAPGFRFHPT…YYALYKLFKK (151 aa)). A DNA-binding region spans residues 115–172 (VGLKKTLVFYRGRAPSGERTDWVMHEYTMDEDELGRCKNPQEYYALYKLFKKSGAGPK). A helical membrane pass occupies residues 526–546 (FLLLSIVGALCAIFWVLVATV).

As to expression, expressed in roots, rosette leaves, cauline leaves, shoot apex, stems and flowers.

It localises to the endoplasmic reticulum membrane. The protein resides in the nucleus. Functionally, transcriptional activator activated by proteolytic cleavage through regulated intramembrane proteolysis (RIP). Transcriptional activator that acts as a positive regulator of AOX1A during mitochondrial dysfunction. Binds directly to AOX1A promoter. Mediates mitochondrial retrograde signaling. The sequence is that of NAC domain-containing protein 17 from Arabidopsis thaliana (Mouse-ear cress).